The primary structure comprises 508 residues: Bifunctional purine biosynthesis protein PurH (508 aa).

Residues 1-145 (MIKRALLSTY…KNYKDVIVVV (145 aa)) form the MGS-like domain.

It belongs to the PurH family.

The catalysed reaction is (6R)-10-formyltetrahydrofolate + 5-amino-1-(5-phospho-beta-D-ribosyl)imidazole-4-carboxamide = 5-formamido-1-(5-phospho-D-ribosyl)imidazole-4-carboxamide + (6S)-5,6,7,8-tetrahydrofolate. It catalyses the reaction IMP + H2O = 5-formamido-1-(5-phospho-D-ribosyl)imidazole-4-carboxamide. It functions in the pathway purine metabolism; IMP biosynthesis via de novo pathway; 5-formamido-1-(5-phospho-D-ribosyl)imidazole-4-carboxamide from 5-amino-1-(5-phospho-D-ribosyl)imidazole-4-carboxamide (10-formyl THF route): step 1/1. The protein operates within purine metabolism; IMP biosynthesis via de novo pathway; IMP from 5-formamido-1-(5-phospho-D-ribosyl)imidazole-4-carboxamide: step 1/1. This chain is Bifunctional purine biosynthesis protein PurH, found in Petrotoga mobilis (strain DSM 10674 / SJ95).